Consider the following 122-residue polypeptide: Small ribosomal subunit protein uS13 (122 aa).

Positions 95–116 are enriched in basic residues; it reads GLPCRGQKTKTNARTRKGKKKT. The disordered stretch occupies residues 95 to 122; sequence GLPCRGQKTKTNARTRKGKKKTVGAATK.

Belongs to the universal ribosomal protein uS13 family. In terms of assembly, part of the 30S ribosomal subunit. Forms a loose heterodimer with protein S19. Forms two bridges to the 50S subunit in the 70S ribosome.

In terms of biological role, located at the top of the head of the 30S subunit, it contacts several helices of the 16S rRNA. In the 70S ribosome it contacts the 23S rRNA (bridge B1a) and protein L5 of the 50S subunit (bridge B1b), connecting the 2 subunits; these bridges are implicated in subunit movement. Contacts the tRNAs in the A and P-sites. This is Small ribosomal subunit protein uS13 from Aliarcobacter butzleri (strain RM4018) (Arcobacter butzleri).